Here is a 301-residue protein sequence, read N- to C-terminus: Thyroxine 5-deiodinase (301 aa).

The Cytoplasmic portion of the chain corresponds to 1-41 (MSRQAAPRWVVGEGRGTLGGAATMLRSLLLHSLRLCSQTAS). A helical; Signal-anchor for type II membrane protein transmembrane segment spans residues 42-64 (CLVLFPRFLGTAFMLWLLDFLCI). At 65 to 301 (RKHLLGRRRR…QLHGPQPRRV (237 aa)) the chain is on the extracellular side. The active site involves Sec167. Position 167 (Sec167) is a non-standard amino acid, selenocysteine.

Belongs to the iodothyronine deiodinase family. Monomer. Homodimer. May undergo minor heretodimerization with DIO1 and DIO2. As to expression, highly expressed in mammary gland. Detected at lower levels in kidney, and at very low levels in the other tissues.

Its subcellular location is the cell membrane. The protein resides in the endosome membrane. The catalysed reaction is 3,3',5'-triiodo-L-thyronine + iodide + A + H(+) = L-thyroxine + AH2. It carries out the reaction 3,3'-diiodo-L-thyronine + iodide + A + H(+) = 3,3',5-triiodo-L-thyronine + AH2. The enzyme catalyses 3-iodo-L-thyronine + iodide + A + H(+) = 3,5-diiodo-L-thyronine + AH2. It catalyses the reaction L-thyronine + iodide + A + H(+) = 3-iodo-L-thyronine + AH2. The catalysed reaction is 3',5'-diiodo-L-thyronine + iodide + A + H(+) = 3,3',5'-triiodo-L-thyronine + AH2. It carries out the reaction 3'-iodo-L-thyronine + iodide + A + H(+) = 3,3'-diiodo-L-thyronine + AH2. The enzyme catalyses 3,3',5'-triiodothyronamine + iodide + A + H(+) = 3,3',5,5'-tetraiodothyronamine + AH2. It catalyses the reaction 3',5'-diiodothyronamine + iodide + A + H(+) = 3,3',5'-triiodothyronamine + AH2. The catalysed reaction is 3,3'-diiodothyronamine + iodide + A + H(+) = 3,3',5-triiodothyronamine + AH2. It carries out the reaction 3-iodothyronamine + iodide + A + H(+) = 3,5-diiodothyronamine + AH2. The enzyme catalyses 3'-iodothyronamine + iodide + A + H(+) = 3,3'-diiodothyronamine + AH2. It catalyses the reaction thyronamine + iodide + A + H(+) = 3-iodothyronamine + AH2. Functionally, plays a crucial role in the metabolism of thyroid hormones (TH) and has specific roles in TH activation and inactivation by deiodination. Catalyzes the deiodination of L-thyroxine (T4) to 3,3',5'-triiodothyronine (rT3), 3,5,3'-triiodothyronine (T3) to 3,3'-diiodothyronine (3,3'-T2), 3,5-diiodothyronine (3,5-T2) to 3-monoiodothyronine (3-T1), rT3 to 3',5'-diiodothyronine (3',5'-T2) and 3,3'-T2 to 3'-monoiodothyronine (3'-T1) via inner-ring deiodination (IRD). Catalyzes the deiodination of 3-T1 to L-thyronine (T0) via outer-ring deiodination (ORD). Catalyzes the tyrosyl ring deiodinations of 3,3',5,5'-tetraiodothyronamine, 3,3',5'-triiodothyronamine, 3,5,3'-triiodothyronamine, 3,5-diiodothyronamine, 3,3'-diiodothyronamine and 3-iodothyronamine. The chain is Thyroxine 5-deiodinase (DIO3) from Bos taurus (Bovine).